We begin with the raw amino-acid sequence, 692 residues long: MAHSYLLEVGLEEMPAHVVTPSIQQLKTRVANYLTEERIDFEDIQAYSTPRRLALLISGLADKQPDVDESVKGPAKKIAQDADGNWTKAAIGFTRGQGATVDDIEFKEVKGVEYVYVEKHIQGKPVAEVLAGLNDVITAMNFPTLMRWGSFKLNFIRPIHWLVSLLDDQVVPFDILNVTAGRLTRGHRFLGHDVEIKSATDYVAALKDDFVIVDAAERKATIKDQIQAIVDQHNWVIDWDEELLEEVNNLVEWPTAFAGTFDQKYLELPEPVLITSMKDNQRFFCVRDHDGKLQPAFISVRNGNAVHLDNVIKGNERVLVPRLEDAKFFFDEDQKMTIDQYVDRLKNVSFHDQISSMYDKMARTKALANLLGQQLGLSDQELADLARAASIYKFDLTTQMVGEFAELQGIMGEIYAKRFGENEAVAAAVREHYMPISADGALPQTTVGTVLAIADKLDSIYSFFAVDMIPSGSNDPYALRRQAYGIVRMLADRKWHLNLLDFQASAKQAVEQATPALGLDYAKNADAVTDFFIDRLKQLFSLDHLRHDIVDAVTDTHVTDPAAIVEAAHVLDAHKDDADLKDQVEALTRVIRLAAKGNLSEDDVKVDPSLFENPSEGQLDQAVQALIDAKEGRSLDQQFSALLELEPVISLYFEENMIMDKDEAVKNNRLSLLTILADQTAAFGNLDQLIVK.

It belongs to the class-II aminoacyl-tRNA synthetase family. As to quaternary structure, tetramer of two alpha and two beta subunits.

Its subcellular location is the cytoplasm. The enzyme catalyses tRNA(Gly) + glycine + ATP = glycyl-tRNA(Gly) + AMP + diphosphate. The chain is Glycine--tRNA ligase beta subunit from Limosilactobacillus fermentum (strain NBRC 3956 / LMG 18251) (Lactobacillus fermentum).